Reading from the N-terminus, the 372-residue chain is Recombinase Flp protein (372 aa).

A Tyr recombinase Flp-type domain is found at Gly85–Lys367. Catalysis depends on Tyr292, which acts as the O-(3'-phospho-DNA)-tyrosine intermediate.

This sequence belongs to the 'phage' integrase family.

Its function is as follows. Catalyzes the recombination between the large inverted repetitions of the plasmid. The protein is Recombinase Flp protein of Lachancea fermentati (Zygosaccharomyces fermentati).